Here is an 894-residue protein sequence, read N- to C-terminus: Pentatricopeptide repeat-containing protein At1g19720 (894 aa).

18 PPR repeats span residues 80–110, 114–144, 145–179, 180–214, 215–245, 246–280, 281–315, 316–350, 351–385, 386–416, 417–451, 452–486, 488–522, 523–557, 558–588, 589–623, 624–659, and 660–694; these read KRST…FGLF, DVFV…MRER, NLFT…GVLP, DDFL…GMSS, CLRV…MRER, DVIA…GISP, GLVT…GITA, DVFT…GVVP, NAVT…GFID, DVLV…VKNK, DVYT…NLRP, NIIT…GKVQ, NTAT…RFMP, NSVT…NLDA, IHAV…METK, DIIT…GITP, NRGT…HIIP, and ALEH…SETP. Residues 695–770 are type E motif; that stretch reads IWESFLTGCR…PLGQSWIEVR (76 aa). The type E(+) motif stretch occupies residues 771–801; sequence NLIHTFTTGDQSKLCTDVLYPLVEKMSRLDN. The tract at residues 803–894 is type DYW motif; the sequence is SDQYNGELWI…NGDCSCKDYW (92 aa).

It belongs to the PPR family. PCMP-H subfamily.

This is Pentatricopeptide repeat-containing protein At1g19720 (DYW7) from Arabidopsis thaliana (Mouse-ear cress).